A 482-amino-acid polypeptide reads, in one-letter code: UDP-N-acetylmuramate--L-alanine ligase (482 aa).

123-129 is a binding site for ATP; sequence GTHGKTT.

This sequence belongs to the MurCDEF family.

It is found in the cytoplasm. The enzyme catalyses UDP-N-acetyl-alpha-D-muramate + L-alanine + ATP = UDP-N-acetyl-alpha-D-muramoyl-L-alanine + ADP + phosphate + H(+). The protein operates within cell wall biogenesis; peptidoglycan biosynthesis. In terms of biological role, cell wall formation. In Pseudomonas putida (strain ATCC 47054 / DSM 6125 / CFBP 8728 / NCIMB 11950 / KT2440), this protein is UDP-N-acetylmuramate--L-alanine ligase.